We begin with the raw amino-acid sequence, 213 residues long: Orotate phosphoribosyltransferase (213 aa).

Lys26 contributes to the 5-phospho-alpha-D-ribose 1-diphosphate binding site. 34 to 35 (FF) is an orotate binding site. Residues 72–73 (YK), Arg99, Lys100, Lys103, His105, and 124–132 (DDVITAGTA) each bind 5-phospho-alpha-D-ribose 1-diphosphate. Orotate is bound by residues Thr128 and Arg156.

It belongs to the purine/pyrimidine phosphoribosyltransferase family. PyrE subfamily. As to quaternary structure, homodimer. Mg(2+) serves as cofactor.

The catalysed reaction is orotidine 5'-phosphate + diphosphate = orotate + 5-phospho-alpha-D-ribose 1-diphosphate. Its pathway is pyrimidine metabolism; UMP biosynthesis via de novo pathway; UMP from orotate: step 1/2. Functionally, catalyzes the transfer of a ribosyl phosphate group from 5-phosphoribose 1-diphosphate to orotate, leading to the formation of orotidine monophosphate (OMP). This is Orotate phosphoribosyltransferase from Photorhabdus laumondii subsp. laumondii (strain DSM 15139 / CIP 105565 / TT01) (Photorhabdus luminescens subsp. laumondii).